Reading from the N-terminus, the 179-residue chain is Large ribosomal subunit protein uL5 (179 aa).

The protein belongs to the universal ribosomal protein uL5 family. As to quaternary structure, part of the 50S ribosomal subunit; part of the 5S rRNA/L5/L18/L25 subcomplex. Contacts the 5S rRNA and the P site tRNA. Forms a bridge to the 30S subunit in the 70S ribosome.

In terms of biological role, this is one of the proteins that bind and probably mediate the attachment of the 5S RNA into the large ribosomal subunit, where it forms part of the central protuberance. In the 70S ribosome it contacts protein S13 of the 30S subunit (bridge B1b), connecting the 2 subunits; this bridge is implicated in subunit movement. Contacts the P site tRNA; the 5S rRNA and some of its associated proteins might help stabilize positioning of ribosome-bound tRNAs. This chain is Large ribosomal subunit protein uL5, found in Shewanella putrefaciens (strain CN-32 / ATCC BAA-453).